Reading from the N-terminus, the 481-residue chain is Sucrose phosphorylase (481 aa).

Sucrose is bound by residues Asp-49, His-87, 191 to 193, Glu-234, 291 to 292, 335 to 338, and Arg-392; these read RLD, HD, and DIYQ. Asp-193 acts as the Nucleophile in catalysis. The Proton donor role is filled by Glu-234.

It belongs to the glycosyl hydrolase 13 family. Sucrose phosphorylase subfamily.

It localises to the cytoplasm. It carries out the reaction sucrose + phosphate = D-fructose + alpha-D-glucose 1-phosphate. In terms of biological role, intracellular catabolism of sucrose. Being intracellular, probably not involved in synthesis of extracellular polysaccharides. This Streptococcus mutans serotype c (strain ATCC 700610 / UA159) protein is Sucrose phosphorylase.